Reading from the N-terminus, the 94-residue chain is Citrate lyase acyl carrier protein (94 aa).

S14 carries the post-translational modification O-(phosphoribosyl dephospho-coenzyme A)serine.

Belongs to the CitD family. Oligomer with a subunit composition of (alpha,beta,gamma)6.

The protein localises to the cytoplasm. Covalent carrier of the coenzyme of citrate lyase. The polypeptide is Citrate lyase acyl carrier protein (Halothermothrix orenii (strain H 168 / OCM 544 / DSM 9562)).